Reading from the N-terminus, the 641-residue chain is FAD-binding monooxygenase ausB (641 aa).

Residues 1–68 form a disordered region; the sequence is MAIGPKPESI…DSTTNVPYSL (68 aa). Over residues 49–68 the composition is skewed to polar residues; the sequence is WLTSTDQPQPDSTTNVPYSL. Residues 115–118, 127–128, and Tyr-133 contribute to the FAD site; these read TWYW and DI. Residue 125 to 127 coordinates NADP(+); the sequence is MCD. Residues 272–278 and 295–296 contribute to the NADP(+) site; these read TGSTAVQ and RT.

This sequence belongs to the FAD-binding monooxygenase family. Requires FAD as cofactor.

The enzyme catalyses protoaustinoid A + AH2 + O2 = berkeleyone A + A + H2O. It participates in secondary metabolite biosynthesis; terpenoid biosynthesis. In terms of biological role, FAD-binding monooxygenase; part of the gene cluster A that mediates the biosynthesis of the fungal meroterpenoid acetoxydehydroaustin. The first step of the pathway is the synthesis of 3,5-dimethylorsellinic acid by the polyketide synthase ausA. 3,5-dimethylorsellinic acid is then prenylated by the polyprenyl transferase ausN. Further epoxidation by the FAD-dependent monooxygenase ausM and cyclization by the probable terpene cyclase ausL lead to the formation of protoaustinoid A. Protoaustinoid A is then oxidized to spiro-lactone preaustinoid A3 by the combined action of the FAD-binding monooxygenases ausB and ausC, and the dioxygenase ausE. Acid-catalyzed keto-rearrangement and ring contraction of the tetraketide portion of preaustinoid A3 by ausJ lead to the formation of preaustinoid A4. The aldo-keto reductase ausK, with the help of ausH, is involved in the next step by transforming preaustinoid A4 into isoaustinone which is in turn hydroxylated by the P450 monooxygenase ausI to form austinolide. The cytochrome P450 monooxygenase ausG then modifies austinolide to austinol. Austinol is further acetylated to austin by the O-acetyltransferase ausP, which spontaneously changes to dehydroaustin. The cytochrome P450 monooxygenase then converts dehydroaustin is into 7-dehydrodehydroaustin. The hydroxylation catalyzed by ausR permits the second O-acetyltransferase ausQ to add an additional acetyl group to the molecule, leading to the formation of acetoxydehydroaustin. Due to genetic rearrangements of the clusters and the subsequent loss of some enzymes, the end product of the Penicillium brasilianum austinoid biosynthesis clusters is acetoxydehydroaustin. The protein is FAD-binding monooxygenase ausB of Penicillium brasilianum.